We begin with the raw amino-acid sequence, 319 residues long: MNSKIIGTGGYLPVTVRSNDDLEKMVDTSDEWITTRTGIKERRIANQQETIAFMGKEAALQALEAANLTAEDLDLIIVGTTSNHNAFPSAACEIQNLLGIYDIPAFDISAACAGFTYALSAADNFIKAGSAKKVLVIGADTLAATCDSTDRSTIILFGDGAGAVVISATEDEGILSTHINADGRFGELLKLPNPQRGNAQTVHEAYLSMSGNDVFKVAVKKLSQVVVDTLAANNIEKEQLDWLVPHQANKRIITATAKKLGMSMDQVILTLENQGNTSAASVPLALDEGVRSGKIKPGQLILLEAFGGGFTWGSALVRM.

Active-site residues include cysteine 112 and histidine 246. The ACP-binding stretch occupies residues 247 to 251; sequence QANKR. Asparagine 276 is an active-site residue.

Belongs to the thiolase-like superfamily. FabH family. As to quaternary structure, homodimer.

Its subcellular location is the cytoplasm. The catalysed reaction is malonyl-[ACP] + acetyl-CoA + H(+) = 3-oxobutanoyl-[ACP] + CO2 + CoA. It participates in lipid metabolism; fatty acid biosynthesis. Catalyzes the condensation reaction of fatty acid synthesis by the addition to an acyl acceptor of two carbons from malonyl-ACP. Catalyzes the first condensation reaction which initiates fatty acid synthesis and may therefore play a role in governing the total rate of fatty acid production. Possesses both acetoacetyl-ACP synthase and acetyl transacylase activities. Its substrate specificity determines the biosynthesis of branched-chain and/or straight-chain of fatty acids. This Psychromonas ingrahamii (strain DSM 17664 / CCUG 51855 / 37) protein is Beta-ketoacyl-[acyl-carrier-protein] synthase III.